Consider the following 600-residue polypeptide: Glutamine--fructose-6-phosphate aminotransferase [isomerizing] (600 aa).

Catalysis depends on cysteine 2, which acts as the Nucleophile; for GATase activity. The Glutamine amidotransferase type-2 domain maps to 2-217; that stretch reads CGIVGYIGNE…DEELVIVRRD (216 aa). SIS domains are found at residues 283–422 and 452–590; these read IRAA…AAGK and IARD…VDKP. Lysine 595 functions as the For Fru-6P isomerization activity in the catalytic mechanism.

In terms of assembly, homodimer.

It is found in the cytoplasm. It carries out the reaction D-fructose 6-phosphate + L-glutamine = D-glucosamine 6-phosphate + L-glutamate. In terms of biological role, catalyzes the first step in hexosamine metabolism, converting fructose-6P into glucosamine-6P using glutamine as a nitrogen source. The chain is Glutamine--fructose-6-phosphate aminotransferase [isomerizing] from Shouchella clausii (strain KSM-K16) (Alkalihalobacillus clausii).